The sequence spans 154 residues: Transcriptional repressor NrdR (154 aa).

A zinc finger spans residues 3–34 (CPFCGHSNTQVLDTRMSEDGDAVRRRRRCEAC). The ATP-cone domain occupies 49–139 (PAIVKKNGSR…VYRSFEDVAE (91 aa)).

The protein belongs to the NrdR family. Requires Zn(2+) as cofactor.

Negatively regulates transcription of bacterial ribonucleotide reductase nrd genes and operons by binding to NrdR-boxes. The sequence is that of Transcriptional repressor NrdR from Cupriavidus pinatubonensis (strain JMP 134 / LMG 1197) (Cupriavidus necator (strain JMP 134)).